The chain runs to 231 residues: MKRFVSVVALSGVVSLAGCVAPTPKPNDPYYAPVLPRTPLPSAANNGSIYQAGFEQNLYSDRKAFRVGDIITITLNERTQASKNANSQVAKNSKTGIGLTSLFGGSATTNNPLGGNDLSLDVGYSGDRATKGDSKAAQGNTLTGSITVTVADVLPNGIIAVRGEKWMTLNTGDELVRIAGLVRADDIATDNTVSSTRVADARITYSGTGSFADASQPGWFDRFFLSPLFPF.

The N-terminal stretch at 1–18 (MKRFVSVVALSGVVSLAG) is a signal peptide. Cysteine 19 carries N-palmitoyl cysteine lipidation. The S-diacylglycerol cysteine moiety is linked to residue cysteine 19.

Belongs to the FlgH family. In terms of assembly, the basal body constitutes a major portion of the flagellar organelle and consists of four rings (L,P,S, and M) mounted on a central rod.

The protein localises to the cell outer membrane. Its subcellular location is the bacterial flagellum basal body. In terms of biological role, assembles around the rod to form the L-ring and probably protects the motor/basal body from shearing forces during rotation. The sequence is that of Flagellar L-ring protein from Pseudomonas fluorescens (strain Pf0-1).